The sequence spans 256 residues: Fumarate reductase cytochrome b subunit (256 aa).

Topologically, residues 1 to 30 (MTNESILESYSGVTPERKKSRMPAKLDWWQ) are cytoplasmic. Residues 31-52 (SATGLFLGLFMIGHMFFVSTIL) traverse the membrane as a helical segment. Position 44 (histidine 44) interacts with heme b. Residues 53 to 76 (LGDNVMLWVTKKFELDFIFEGGKP) are Periplasmic-facing. A helical membrane pass occupies residues 77–98 (IVVSFLAAFVFAVFIAHAFLAM). Heme b is bound at residue histidine 93. Topologically, residues 99-124 (RKFPINYRQYLTFKTHKDLMRHGDTT) are cytoplasmic. Residues 125–149 (LWWIQAMTGFAMFFLGSVHLYIMMT) form a helical membrane-spanning segment. Histidine 143 serves as a coordination point for heme b. Topologically, residues 150-165 (QPQTIGPVSSSFRMVS) are periplasmic. A helical transmembrane segment spans residues 166–188 (EWMWPLYLVLLFAVELHGSVGLY). Heme b is bound at residue histidine 182. Topologically, residues 189–206 (RLAVKWGWFDGETPDKTR) are cytoplasmic. A helical transmembrane segment spans residues 207-230 (ANLKKLKTLMSAFLIVLGLLTFGA). Residues 231–256 (YVKKGLEQTDPNIDYKYFDYKRTHHR) are Periplasmic-facing.

It belongs to the diheme cytochrome b FrdC family. Part of an enzyme complex containing three subunits: a flavoprotein (frdA), an iron-sulfur protein (frdB), and diheme cytochrome b (frdC). Requires heme b as cofactor.

It is found in the cell inner membrane. The fumarate reductase enzyme complex is required for fumarate respiration using formate or sulfide as electron donor. This subunit anchors the complex in the membrane and binds a diheme cytochrome b. The sequence is that of Fumarate reductase cytochrome b subunit (frdC) from Wolinella succinogenes (strain ATCC 29543 / DSM 1740 / CCUG 13145 / JCM 31913 / LMG 7466 / NCTC 11488 / FDC 602W) (Vibrio succinogenes).